The primary structure comprises 67 residues: Alpha-conotoxin-like Qc1.1a (67 aa).

A signal peptide spans 1–21 (MGMRMMFTMFLLVVLAITVVS). The propeptide occupies 22–46 (FTSDHASDGRNTAANDKASNLMALR). Disulfide bonds link C49–C55 and C50–C63. Positions 51-53 (PDP) are lacks the Ser-Xaa-Pro motif that is crucial for potent interaction with nAChR.

Belongs to the conotoxin A superfamily. Expressed by the venom duct.

It is found in the secreted. Functionally, alpha-conotoxins act on postsynaptic membranes, they bind to the nicotinic acetylcholine receptors (nAChR) and thus inhibit them. Has possibly a distinct nAChR binding mode from other alpha-conotoxins, due to a different three residue motif (lacks the Ser-Xaa-Pro motif). The polypeptide is Alpha-conotoxin-like Qc1.1a (Conus quercinus (Oak cone)).